The primary structure comprises 242 residues: MTEITDRYFNDVIARLSGLRDRLAAQMEKAADLIAAAARADRRVYVFGTGHSHMMAEELHYRAGGLAITVPILCGSIMLQDGAVASSHFERIEGAVRPILDRYGIRDGDVLVVVSNSGVNAAPIEAARYAREKGAAIIALTSVAYSNTIARGRTQLLSLADVVLDNDAPSGDAVLEIAGSALKVGPVSTALGVTILNAVFADVAARLVGEGDALIYLSANMPGSGDINRLLVERYRDRNPHL.

The region spanning 30–209 is the SIS domain; that stretch reads AADLIAAAAR…FADVAARLVG (180 aa).

This sequence belongs to the UPF0309 family.

In Brucella ovis (strain ATCC 25840 / 63/290 / NCTC 10512), this protein is UPF0309 protein BOV_A0853.